A 400-amino-acid polypeptide reads, in one-letter code: Peptidase M20 domain-containing protein C757.05c (400 aa).

A signal peptide spans 1–25; it reads MTMKISVWSLLIVIGYHLWMSPVLA. Asparagine 80 is a glycosylation site (N-linked (GlcNAc...) asparagine). Aspartate 152 is a binding site for Zn(2+). Catalysis depends on glutamate 186, which acts as the Proton acceptor. Zn(2+) is bound at residue glutamate 187.

Belongs to the peptidase M20A family. Requires Zn(2+) as cofactor.

It is found in the secreted. The sequence is that of Peptidase M20 domain-containing protein C757.05c from Schizosaccharomyces pombe (strain 972 / ATCC 24843) (Fission yeast).